The following is a 918-amino-acid chain: Glutamate receptor ionotropic, kainate 1 (918 aa).

The signal sequence occupies residues 1-30; that stretch reads MEHGTLLAQPGLWTRDTSWALLYFLCYILP. Residues 31–576 lie on the Extracellular side of the membrane; sequence QTAPQVLRIG…VFSFLNPLSP (546 aa). N-linked (GlcNAc...) asparagine glycans are attached at residues Asn-68, Asn-74, Asn-276, Asn-379, Asn-428, Asn-439, and Asn-446. The L-glutamate site is built by Pro-531, Thr-533, and Arg-538. Asn-561 is a glycosylation site (N-linked (GlcNAc...) asparagine). Residues 577-597 traverse the membrane as a helical segment; it reads DIWMYVLLACLGVSCVLFVIA. Residues 598–653 are Cytoplasmic-facing; that stretch reads RFTPYEWYNPHPCNPDSDVVENNFTLLNSFWFGVGALMQQGSELMPKALSTRIVGG. Residues 654-674 traverse the membrane as a helical segment; the sequence is IWWFFTLIIISSYTANLAAFL. Topologically, residues 675 to 834 are extracellular; sequence TVERMESPID…KEASALGVEN (160 aa). The L-glutamate site is built by Ser-704 and Thr-705. Residue Ser-725 is modified to Phosphoserine; by PKC. Glu-753 contributes to the L-glutamate binding site. A Phosphothreonine; by PKC modification is found at Thr-761. A disulfide bond links Cys-765 and Cys-819. An N-linked (GlcNAc...) asparagine glycan is attached at Asn-766. A helical transmembrane segment spans residues 835-855; sequence IGGIFIVLAAGLVLSVFVAIG. The Cytoplasmic portion of the chain corresponds to 856–918; it reads EFIYKSRKNN…IRKQSSVHTV (63 aa).

The protein belongs to the glutamate-gated ion channel (TC 1.A.10.1) family. GRIK1 subfamily. Homotetramer or heterotetramer of pore-forming glutamate receptor subunits. Tetramers may be formed by the dimerization of dimers. Can form functional heteromeric receptors with GRIK5. Can form functional heteromeric receptors with GRIK4. Interacts with KLHL17.

It localises to the cell membrane. It is found in the postsynaptic cell membrane. The catalysed reaction is Ca(2+)(in) = Ca(2+)(out). Its function is as follows. Ionotropic glutamate receptor that functions as a cation-permeable ligand-gated ion channel, gated by L-glutamate and the glutamatergic agonist kainic acid. L-glutamate acts as an excitatory neurotransmitter at many synapses in the central nervous system. Binding of the excitatory neurotransmitter L-glutamate induces a conformation change, leading to the opening of the cation channel, and thereby converts the chemical signal to an electrical impulse. The receptor then desensitizes rapidly and enters a transient inactive state, characterized by the presence of bound agonist. In terms of biological role, ionotropic glutamate receptor that functions as a cation-permeable ligand-gated ion channel, gated by L-glutamate and the glutamatergic agonist kainic acid. The polypeptide is Glutamate receptor ionotropic, kainate 1 (GRIK1) (Homo sapiens (Human)).